Reading from the N-terminus, the 399-residue chain is Succinate--CoA ligase [ADP-forming] subunit beta (399 aa).

The 246-residue stretch at 9–254 (KELLAKFGVA…ETEEDPAEIE (246 aa)) folds into the ATP-grasp domain. ATP is bound by residues lysine 46, 53 to 55 (GRG), alanine 112, and glutamate 117. Residues asparagine 209 and aspartate 223 each contribute to the Mg(2+) site. Substrate contacts are provided by residues asparagine 274 and 331 to 333 (GIM).

The protein belongs to the succinate/malate CoA ligase beta subunit family. As to quaternary structure, heterotetramer of two alpha and two beta subunits. The cofactor is Mg(2+).

The catalysed reaction is succinate + ATP + CoA = succinyl-CoA + ADP + phosphate. The enzyme catalyses GTP + succinate + CoA = succinyl-CoA + GDP + phosphate. Its pathway is carbohydrate metabolism; tricarboxylic acid cycle; succinate from succinyl-CoA (ligase route): step 1/1. Functionally, succinyl-CoA synthetase functions in the citric acid cycle (TCA), coupling the hydrolysis of succinyl-CoA to the synthesis of either ATP or GTP and thus represents the only step of substrate-level phosphorylation in the TCA. The beta subunit provides nucleotide specificity of the enzyme and binds the substrate succinate, while the binding sites for coenzyme A and phosphate are found in the alpha subunit. This chain is Succinate--CoA ligase [ADP-forming] subunit beta, found in Rhizorhabdus wittichii (strain DSM 6014 / CCUG 31198 / JCM 15750 / NBRC 105917 / EY 4224 / RW1) (Sphingomonas wittichii).